Here is a 704-residue protein sequence, read N- to C-terminus: Probable serine/threonine-protein kinase WNK1 (704 aa).

Positions 27 to 284 (GRYNDVLGKG…ARELLKDPFL (258 aa)) constitute a Protein kinase domain. ATP-binding positions include 107–110 (TEMF) and K157. D174 serves as the catalytic Proton acceptor. Residues 499 to 521 (QTDLQDSGGSSDDGGGQTQHVKD) are disordered.

The protein belongs to the protein kinase superfamily. Ser/Thr protein kinase family. WNK subfamily.

The catalysed reaction is L-seryl-[protein] + ATP = O-phospho-L-seryl-[protein] + ADP + H(+). It catalyses the reaction L-threonyl-[protein] + ATP = O-phospho-L-threonyl-[protein] + ADP + H(+). In Oryza sativa subsp. japonica (Rice), this protein is Probable serine/threonine-protein kinase WNK1 (WNK1).